A 584-amino-acid chain; its full sequence is Putative poly(A) polymerase catalytic subunit (584 aa).

The segment covering 522 to 531 (EAEISEKEET) has biased composition (basic and acidic residues). The tract at residues 522–584 (EAEISEKEET…ENSLDSLTSD (63 aa)) is disordered. Low complexity predominate over residues 546–569 (SPNSSPNSSPNNSLNNSIDISTNN).

The protein belongs to the poxviridae poly(A) polymerase catalytic subunit family. Highly divergent.

It localises to the virion. It catalyses the reaction RNA(n) + ATP = RNA(n)-3'-adenine ribonucleotide + diphosphate. In terms of biological role, polymerase that creates the 3'-poly(A) tail of mRNA's. The protein is Putative poly(A) polymerase catalytic subunit of Acanthamoeba polyphaga (Amoeba).